A 60-amino-acid polypeptide reads, in one-letter code: Mastoparan-VT3 (60 aa).

A signal peptide spans 1–27 (MKNTILILFTAFIALLGFFGMSAEALA). AXPX repeat units lie at residues 27-30 (ADPK), 31-34 (ADPL), 35-38 (AGPN), and 41-44 (ADPE). Residues 28–45 (DPKADPLAGPNPDADPEA) constitute a propeptide that is removed on maturation. Leu-59 is modified (leucine amide).

Belongs to the MCD family. Mastoparan subfamily. Expressed by the venom gland.

It localises to the secreted. In terms of biological role, the synthetic peptide shows antimicrobial activities against Gram-negative bacteria (but not against all strains tested), Gram-positive bacteria (all strains tested) and the fungi C.albicans and C.parapsilosis. Exhibits moderate hemolytic activity (25% at 100 ug/ml) against washed human erythrocytes. The chain is Mastoparan-VT3 from Vespa tropica (Greater banded hornet).